The chain runs to 374 residues: Quinolinate synthase (374 aa).

Iminosuccinate is bound by residues histidine 53 and serine 70. A [4Fe-4S] cluster-binding site is contributed by cysteine 116. Iminosuccinate is bound by residues 148–150 (YMN) and serine 169. Position 236 (cysteine 236) interacts with [4Fe-4S] cluster. Iminosuccinate contacts are provided by residues 262 to 264 (HPE) and threonine 279. [4Fe-4S] cluster is bound at residue cysteine 327.

Belongs to the quinolinate synthase family. Type 3 subfamily. The cofactor is [4Fe-4S] cluster.

Its subcellular location is the cytoplasm. The catalysed reaction is iminosuccinate + dihydroxyacetone phosphate = quinolinate + phosphate + 2 H2O + H(+). It participates in cofactor biosynthesis; NAD(+) biosynthesis; quinolinate from iminoaspartate: step 1/1. Its function is as follows. Catalyzes the condensation of iminoaspartate with dihydroxyacetone phosphate to form quinolinate. The chain is Quinolinate synthase from Halobacterium salinarum (strain ATCC 29341 / DSM 671 / R1).